A 437-amino-acid polypeptide reads, in one-letter code: Inactive peptidyl-prolyl cis-trans isomerase shutdown (437 aa).

The region spanning 92-178 (DSEVTIHYAA…RPEPALFVIV (87 aa)) is the PPIase FKBP-type domain. 3 TPR repeats span residues 209–242 (VNALRADAKELYKKKKYVKAIKNYQQAISVLRLS), 258–294 (VNAYLNLAVCYYKTNKPKHVLNMCECLDRLIDTEKHC), and 295–327 (KALYYYGKAHEMLGKTEMAIKYYKKALKLEPKN).

Belongs to the FKBP6 family. Interacts with Hsp83.

The protein localises to the cytoplasm. In terms of biological role, co-chaperone required during oogenesis to repress transposable elements and prevent their mobilization, which is essential for the germline integrity. Acts via the piRNA metabolic process, which mediates the repression of transposable elements during meiosis by forming complexes composed of piRNAs and Piwi proteins and govern the methylation and subsequent repression of transposons. Acts as a co-chaperone via its interaction with Hsp83/HSP90 and is required for the biogenesis of all three piRNA major populations. This Bombyx mori (Silk moth) protein is Inactive peptidyl-prolyl cis-trans isomerase shutdown (shu).